Consider the following 588-residue polypeptide: Glutamyl-tRNA(Gln) amidotransferase subunit B, mitochondrial (588 aa).

The transit peptide at 1 to 109 (MLRSWIGSGT…RAPTSTSETP (109 aa)) directs the protein to the mitochondrion. Residues 22-35 (SSLPSPKASFSSAP) show a composition bias toward low complexity. The segment at 22–50 (SSLPSPKASFSSAPNRYLQPPTSADRVPL) is disordered.

The protein belongs to the GatB/GatE family. GatB subfamily. In terms of assembly, subunit of the heterotrimeric GatCAB amidotransferase (AdT) complex, composed of A, B and C subunits.

It is found in the mitochondrion. The enzyme catalyses L-glutamyl-tRNA(Gln) + L-glutamine + ATP + H2O = L-glutaminyl-tRNA(Gln) + L-glutamate + ADP + phosphate + H(+). Its function is as follows. Allows the formation of correctly charged Gln-tRNA(Gln) through the transamidation of misacylated Glu-tRNA(Gln) in the mitochondria. The reaction takes place in the presence of glutamine and ATP through an activated gamma-phospho-Glu-tRNA(Gln). The sequence is that of Glutamyl-tRNA(Gln) amidotransferase subunit B, mitochondrial from Penicillium rubens (strain ATCC 28089 / DSM 1075 / NRRL 1951 / Wisconsin 54-1255) (Penicillium chrysogenum).